A 668-amino-acid polypeptide reads, in one-letter code: Metastasis-associated protein MTA2 (668 aa).

The 144-residue stretch at 1 to 144 (MAANMYRVGD…PVQKTLLADQ (144 aa)) folds into the BAH domain. A phosphoserine mark is found at S52 and S54. An ELM2 domain is found at 145-256 (GEIRVGCKYQ…KAMSTLVPQG (112 aa)). Residue K152 is modified to N6-acetyllysine. The SANT domain occupies 263 to 315 (DEMEEWSASEAMLFEEALEKYGKDFNDIRQDFLPWKSLASIVQFYYMWKTTDR). The segment at 367-394 (CESCHTTQSAQWYAWGPPNMQCRLCASC) adopts a GATA-type; atypical zinc-finger fold. Residues 409-419 (QLEGATRGTTE) show a composition bias toward polar residues. Positions 409-437 (QLEGATRGTTEPHSRGHLSRPEAQSLSPY) are disordered. Phosphoserine is present on residues S433 and S435. An N6-acetyllysine modification is found at K460. K492 participates in a covalent cross-link: Glycyl lysine isopeptide (Lys-Gly) (interchain with G-Cter in SUMO2 and SUMO3); alternate. A Glycyl lysine isopeptide (Lys-Gly) (interchain with G-Cter in SUMO2); alternate cross-link involves residue K492. Residue K508 forms a Glycyl lysine isopeptide (Lys-Gly) (interchain with G-Cter in SUMO2) linkage. Residues K522 and K531 each carry the N6-acetyllysine modification. Phosphothreonine is present on T534. S548 is modified (phosphoserine). Residues K559 and K595 each participate in a glycyl lysine isopeptide (Lys-Gly) (interchain with G-Cter in SUMO2) cross-link. Disordered regions lie at residues 580–599 (ASGI…LNPA) and 647–668 (PPVP…VLED).

This sequence belongs to the metastasis-associated protein family. In terms of assembly, component of the nucleosome remodeling and deacetylase (NuRD) repressor complex, composed of core proteins MTA1, MTA2, MTA3, RBBP4, RBBP7, HDAC1, HDAC2, MBD2, MBD3, and peripherally associated proteins CDK2AP1, CDK2AP2, GATAD2A, GATAD2B, CHD3, CHD4 and CHD5. The exact stoichiometry of the NuRD complex is unknown, and some subunits such as MBD2 and MBD3, GATAD2A and GATAD2B, and CHD3, CHD4 and CHD5 define mutually exclusive NuRD complexes. Interacts with CHD3. Interacts with CHD4. Interacts with GATAD2A. Interacts with HDAC7. Interacts with MBD3. Interacts with p53/TP53. Interacts with MINT. Interacts with PIMREG. Interacts with NACC2. Interacts with ERCC6. Interacts with PWWP2B. Interacts with transcription factor BCL11A. Widely expressed.

The protein resides in the nucleus. May function as a transcriptional coregulator. Acts as a component of the histone deacetylase NuRD complex which participates in the remodeling of chromatin. This Homo sapiens (Human) protein is Metastasis-associated protein MTA2 (MTA2).